Reading from the N-terminus, the 1096-residue chain is Protein EMBRYONIC FLOWER 1 (1096 aa).

Disordered stretches follow at residues 155 to 189 (KARG…EKLN), 274 to 296 (KTSG…VRGR), 315 to 348 (GATS…KGKQ), 366 to 420 (ETSQ…KKPV), 563 to 612 (LSRV…DIPM), 629 to 651 (DKEE…KNAL), 1007 to 1032 (DKEK…KNSS), and 1070 to 1096 (FKKK…TQNA). 2 consecutive short sequence motifs (nuclear localization signal) follow at residues 170 to 177 (SRKLVSPE) and 281 to 288 (IRKEESAL). A compositionally biased stretch (basic and acidic residues) spans 281-294 (IRKEESALKKESVR). The segment covering 315–337 (GATSENASKSCDSDQGNSESTDS) has biased composition (polar residues). Residues 337-617 (SGFDRTPFKG…DDIPMEIVEL (281 aa)) are DNA-binding. Positions 371 to 381 (GIKEHDADPSK) are enriched in basic and acidic residues. Residues 382–394 (RSTPAHSLFTGND) show a composition bias toward polar residues. A compositionally biased stretch (basic and acidic residues) spans 572 to 601 (SGADRKGKTVMVQEHHGAPRSQSHDRKETT). The tract at residues 866-1096 (LDPRLRSTTP…KPVCPPTQNA (231 aa)) is DNA-binding. The segment covering 1018–1032 (SCNNNASAGPVKNSS) has biased composition (polar residues). A Nuclear localization signal 3 motif is present at residues 1071-1078 (KKKPAVCK).

As to quaternary structure, interacts with MSI1. As to expression, expressed in mature embryo, root tips, cotyledons, leaves, stems, shoot apex, and flower clusters, with highest levels in flowers. The presence in the shoot apical meristem (SAM) is required to maintain vegetative development and prevent early flowering.

The protein localises to the nucleus. Transcription repressor that regulates phase transition during shoot, flower and seeds development. Controls leaves development, shoot architecture and flowering by delaying both the vegetative to reproductive transition and flower initiation. Participates in polycomb group (PcG) protein complex-mediated (including EMF2) silencing of the flower homeotic genes AGAMOUS (AG), PISTILLATA (PI), and APETALA3 (AP3), as well as of some regulatory genes such as ABSCISIC ACID INSENSITIVE3 (ABI3), LONG VEGETATIVE PHASE1 (LOV1), and FLOWERING LOCUS C (FLC) during vegetative development. Required for histone methylation or for maintaining a stable histone methylation (e.g. H3K27me3) pattern of repressed target genes (including genes involved in salt stress response and flower development); this repression is counteracted by ULT1. Can bind non specifically DNA (both double- and single-stranded) and RNA. The sequence is that of Protein EMBRYONIC FLOWER 1 from Arabidopsis thaliana (Mouse-ear cress).